Consider the following 170-residue polypeptide: Ribosome maturation factor RimM (170 aa).

The PRC barrel domain maps to 98-170 (EGQYYWADLE…RIELDWDPDF (73 aa)).

Belongs to the RimM family. In terms of assembly, binds ribosomal protein uS19.

It is found in the cytoplasm. An accessory protein needed during the final step in the assembly of 30S ribosomal subunit, possibly for assembly of the head region. Essential for efficient processing of 16S rRNA. May be needed both before and after RbfA during the maturation of 16S rRNA. It has affinity for free ribosomal 30S subunits but not for 70S ribosomes. The sequence is that of Ribosome maturation factor RimM from Alkalilimnicola ehrlichii (strain ATCC BAA-1101 / DSM 17681 / MLHE-1).